We begin with the raw amino-acid sequence, 425 residues long: Serine--tRNA ligase (425 aa).

An L-serine-binding site is contributed by 232–234; that stretch reads TAE. Residues 263 to 265 and Val279 each bind ATP; that span reads RRE. An L-serine-binding site is contributed by Glu286. 350-353 contacts ATP; the sequence is EVVS. Position 387 (Thr387) interacts with L-serine.

The protein belongs to the class-II aminoacyl-tRNA synthetase family. Type-1 seryl-tRNA synthetase subfamily. As to quaternary structure, homodimer. The tRNA molecule binds across the dimer.

The protein resides in the cytoplasm. The enzyme catalyses tRNA(Ser) + L-serine + ATP = L-seryl-tRNA(Ser) + AMP + diphosphate + H(+). It catalyses the reaction tRNA(Sec) + L-serine + ATP = L-seryl-tRNA(Sec) + AMP + diphosphate + H(+). It participates in aminoacyl-tRNA biosynthesis; selenocysteinyl-tRNA(Sec) biosynthesis; L-seryl-tRNA(Sec) from L-serine and tRNA(Sec): step 1/1. Functionally, catalyzes the attachment of serine to tRNA(Ser). Is also able to aminoacylate tRNA(Sec) with serine, to form the misacylated tRNA L-seryl-tRNA(Sec), which will be further converted into selenocysteinyl-tRNA(Sec). The protein is Serine--tRNA ligase of Methanocorpusculum labreanum (strain ATCC 43576 / DSM 4855 / Z).